The sequence spans 117 residues: Movement and RNA silencing protein (117 aa).

A helical transmembrane segment spans residues 15–35; it reads FLFFGAIFIAITILYILLVLL. The interval 83–117 is disordered; sequence RDQEPAVIPHVSQVIPSQPNRRDDQGRRGNAGPMF.

Its subcellular location is the host cell membrane. Its function is as follows. Transports viral genome to neighboring plant cells directly through plasmosdesmata, without any budding. The movement protein allows efficient cell to cell propagation, by bypassing the host cell wall barrier. Begomovirus genome is shuttled out of nucleus by Nuclear shuttle protein (NSP) and the movement protein transports the DNA-NSP complex to cell plasmodesmata and facilitates further movement across the cell wall. Acts as a suppressor of RNA-mediated gene silencing, also known as post-transcriptional gene silencing (PTGS), a mechanism of plant viral defense that limits the accumulation of viral RNAs. This Banana bunchy top virus (isolate Autralia) (BBTV) protein is Movement and RNA silencing protein (DNA-M).